We begin with the raw amino-acid sequence, 308 residues long: Oligopeptide transport ATP-binding protein AmiF (308 aa).

The 246-residue stretch at 6–251 (VEIKDLEISF…PIHPYTQALL (246 aa)) folds into the ABC transporter domain. 42–49 (GESGSGKT) is an ATP binding site.

This sequence belongs to the ABC transporter superfamily.

The protein localises to the cell membrane. In terms of biological role, part of the binding-protein-dependent transport system for oligopeptides. Probably responsible for energy coupling to the transport system. The protein is Oligopeptide transport ATP-binding protein AmiF (amiF) of Streptococcus pneumoniae serotype 4 (strain ATCC BAA-334 / TIGR4).